The chain runs to 187 residues: Putative manganese efflux pump MntP (187 aa).

6 consecutive transmembrane segments (helical) span residues 8–28, 39–59, 65–85, 106–126, 131–151, and 166–186; these read FLSI…GFII, IALF…LTGL, LANF…GKMI, LFAL…GLSV, ILLA…IGVF, and ILGG…GLII.

It belongs to the MntP (TC 9.B.29) family.

Its subcellular location is the cell inner membrane. Functionally, probably functions as a manganese efflux pump. The chain is Putative manganese efflux pump MntP from Rippkaea orientalis (strain PCC 8801 / RF-1) (Cyanothece sp. (strain PCC 8801)).